A 160-amino-acid polypeptide reads, in one-letter code: Ribosomal RNA large subunit methyltransferase H (160 aa).

Residues leucine 77 and glycine 109 each coordinate S-adenosyl-L-methionine.

The protein belongs to the RNA methyltransferase RlmH family. In terms of assembly, homodimer.

The protein resides in the cytoplasm. It catalyses the reaction pseudouridine(1915) in 23S rRNA + S-adenosyl-L-methionine = N(3)-methylpseudouridine(1915) in 23S rRNA + S-adenosyl-L-homocysteine + H(+). Its function is as follows. Specifically methylates the pseudouridine at position 1915 (m3Psi1915) in 23S rRNA. The sequence is that of Ribosomal RNA large subunit methyltransferase H from Moorella thermoacetica (strain ATCC 39073 / JCM 9320).